Here is a 377-residue protein sequence, read N- to C-terminus: 2-aminoethylphosphonate--pyruvate transaminase (377 aa).

Lysine 194 bears the N6-(pyridoxal phosphate)lysine mark.

This sequence belongs to the class-V pyridoxal-phosphate-dependent aminotransferase family. PhnW subfamily. As to quaternary structure, homodimer. Pyridoxal 5'-phosphate serves as cofactor.

It catalyses the reaction (2-aminoethyl)phosphonate + pyruvate = phosphonoacetaldehyde + L-alanine. Functionally, involved in phosphonate degradation. This is 2-aminoethylphosphonate--pyruvate transaminase from Cupriavidus taiwanensis (strain DSM 17343 / BCRC 17206 / CCUG 44338 / CIP 107171 / LMG 19424 / R1) (Ralstonia taiwanensis (strain LMG 19424)).